The chain runs to 402 residues: p-cumate 2,3-dioxygenase system, ferredoxin--NAD(+) reductase component (402 aa).

FAD is bound by residues alanine 16, lysine 51, valine 83, arginine 131, and aspartate 275.

It belongs to the FAD-dependent oxidoreductase family. The p-cumate 2,3-dioxygenase multicomponent enzyme system is composed of an electron transfer component and a dioxygenase component (iron sulfur protein (ISP)). The electron transfer component is composed of a ferredoxin reductase (CmtAa) and a ferredoxin (CmtAd), and the dioxygenase component is formed of a large alpha subunit (CmtAb) and a small beta subunit (CmtAc). FAD is required as a cofactor.

It catalyses the reaction 2 reduced [2Fe-2S]-[ferredoxin] + NAD(+) + H(+) = 2 oxidized [2Fe-2S]-[ferredoxin] + NADH. Its pathway is aromatic compound metabolism; p-cumate degradation; acetaldehyde and pyruvate from p-cumate. Component of the p-cumate 2,3-dioxygenase multicomponent enzyme system which catalyzes the incorporation of both atoms of molecular oxygen into p-cumate to form cis-2,3-dihydroxy-2,3-dihydro-p-cumate. Ferredoxin reductase catalyzes the transfer of electrons from NADH to ferredoxin (CmtAd). This chain is p-cumate 2,3-dioxygenase system, ferredoxin--NAD(+) reductase component, found in Pseudomonas putida (Arthrobacter siderocapsulatus).